The primary structure comprises 214 residues: Octanoyltransferase (214 aa).

The 177-residue stretch at 35–211 (KSNIDFIWLG…IIQEEFYFNF (177 aa)) folds into the BPL/LPL catalytic domain. Substrate is bound by residues 75-82 (RGGEVTCH), 142-144 (SIG), and 155-157 (GFS). Cys-173 serves as the catalytic Acyl-thioester intermediate.

The protein belongs to the LipB family.

The protein resides in the cytoplasm. The enzyme catalyses octanoyl-[ACP] + L-lysyl-[protein] = N(6)-octanoyl-L-lysyl-[protein] + holo-[ACP] + H(+). The protein operates within protein modification; protein lipoylation via endogenous pathway; protein N(6)-(lipoyl)lysine from octanoyl-[acyl-carrier-protein]: step 1/2. In terms of biological role, catalyzes the transfer of endogenously produced octanoic acid from octanoyl-acyl-carrier-protein onto the lipoyl domains of lipoate-dependent enzymes. Lipoyl-ACP can also act as a substrate although octanoyl-ACP is likely to be the physiological substrate. The protein is Octanoyltransferase of Prochlorococcus marinus (strain MIT 9515).